Here is a 334-residue protein sequence, read N- to C-terminus: 6-phosphogluconolactonase (334 aa).

Belongs to the cycloisomerase 2 family.

It carries out the reaction 6-phospho-D-glucono-1,5-lactone + H2O = 6-phospho-D-gluconate + H(+). It functions in the pathway carbohydrate degradation; pentose phosphate pathway; D-ribulose 5-phosphate from D-glucose 6-phosphate (oxidative stage): step 2/3. Functionally, catalyzes the hydrolysis of 6-phosphogluconolactone to 6-phosphogluconate. This chain is 6-phosphogluconolactonase, found in Buchnera aphidicola subsp. Acyrthosiphon pisum (strain 5A).